Here is a 429-residue protein sequence, read N- to C-terminus: Maltoporin 2 (429 aa).

The first 25 residues, 1–25 (MMITLRKLPLAVAVAAGVMSAQALA), serve as a signal peptide directing secretion. A compositionally biased stretch (polar residues) spans 397–412 (GLQTKDSSGSGAFTSS). The segment at 397–416 (GLQTKDSSGSGAFTSSRGDD) is disordered.

This sequence belongs to the porin LamB (TC 1.B.3) family. Homotrimer formed of three 18-stranded antiparallel beta-barrels, containing three independent channels.

Its subcellular location is the cell outer membrane. The catalysed reaction is beta-maltose(in) = beta-maltose(out). Involved in the transport of maltose and maltodextrins. In Klebsiella pneumoniae subsp. pneumoniae (strain ATCC 700721 / MGH 78578), this protein is Maltoporin 2.